Here is a 333-residue protein sequence, read N- to C-terminus: Small GTPase-like protein LIP2 (333 aa).

The segment at 11 to 288 is small GTPase-like; sequence NKEHMVAPLC…YKYNTLPQHN (278 aa). GTP is bound by residues 29–36, 90–94, and 160–163; these read GDSGVGKS, DVSGH, and NKAD. Residues 242–253 show a composition bias toward polar residues; sequence SPSSAWSLSHAP. The tract at residues 242-265 is disordered; it reads SPSSAWSLSHAPSQRLDEGTSDED.

This sequence belongs to the small GTPase superfamily.

The polypeptide is Small GTPase-like protein LIP2 (Arabidopsis thaliana (Mouse-ear cress)).